We begin with the raw amino-acid sequence, 146 residues long: Lipoprotein signal peptidase (146 aa).

A run of 3 helical transmembrane segments spans residues 10-30 (GLFV…LGGF), 54-74 (FLEG…LLFL), and 80-100 (FFVA…SNIL). Catalysis depends on residues Asp-110 and Asp-127. Residues 118–138 (FEFAIFNFADVMIDVAVALFL) traverse the membrane as a helical segment.

It belongs to the peptidase A8 family.

It localises to the cell inner membrane. It catalyses the reaction Release of signal peptides from bacterial membrane prolipoproteins. Hydrolyzes -Xaa-Yaa-Zaa-|-(S,diacylglyceryl)Cys-, in which Xaa is hydrophobic (preferably Leu), and Yaa (Ala or Ser) and Zaa (Gly or Ala) have small, neutral side chains.. It participates in protein modification; lipoprotein biosynthesis (signal peptide cleavage). In terms of biological role, this protein specifically catalyzes the removal of signal peptides from prolipoproteins. This is Lipoprotein signal peptidase from Wolinella succinogenes (strain ATCC 29543 / DSM 1740 / CCUG 13145 / JCM 31913 / LMG 7466 / NCTC 11488 / FDC 602W) (Vibrio succinogenes).